The primary structure comprises 365 residues: Magnesium-chelatase subunit ChlI (365 aa).

54-61 (GDRGTGKS) contacts ATP.

This sequence belongs to the Mg-chelatase subunits D/I family.

It localises to the plastid. Its subcellular location is the chloroplast. It carries out the reaction protoporphyrin IX + Mg(2+) + ATP + H2O = Mg-protoporphyrin IX + ADP + phosphate + 3 H(+). The protein operates within porphyrin-containing compound metabolism; chlorophyll biosynthesis. In terms of biological role, involved in chlorophyll biosynthesis; introduces a magnesium ion into protoporphyrin IX to yield Mg-protoporphyrin IX. This Bigelowiella natans (Pedinomonas minutissima) protein is Magnesium-chelatase subunit ChlI (chlI).